A 211-amino-acid polypeptide reads, in one-letter code: Protein-L-isoaspartate O-methyltransferase (211 aa).

Serine 60 is an active-site residue.

The protein belongs to the methyltransferase superfamily. L-isoaspartyl/D-aspartyl protein methyltransferase family.

It is found in the cytoplasm. It catalyses the reaction [protein]-L-isoaspartate + S-adenosyl-L-methionine = [protein]-L-isoaspartate alpha-methyl ester + S-adenosyl-L-homocysteine. Its function is as follows. Catalyzes the methyl esterification of L-isoaspartyl residues in peptides and proteins that result from spontaneous decomposition of normal L-aspartyl and L-asparaginyl residues. It plays a role in the repair and/or degradation of damaged proteins. This chain is Protein-L-isoaspartate O-methyltransferase, found in Hahella chejuensis (strain KCTC 2396).